The primary structure comprises 516 residues: ADP-ribosylation factor GTPase-activating protein 3 (516 aa).

The Arf-GAP domain occupies 10–126 (LTIFKRLRSV…IKSLASQATR (117 aa)). The C4-type zinc finger occupies 25–48 (CFDCGAKNPSWASITYGVFLCIDC). The tract at residues 170–199 (AEPSSLTSRPVETTLENNEGGQEQGPSVEG) is disordered. Over residues 173 to 194 (SSLTSRPVETTLENNEGGQEQG) the composition is skewed to polar residues. At Ser231 the chain carries Phosphoserine. Positions 243 to 264 (NEIEKQAQAADKMKEQEDLAKA) form a coiled coil. Ser270, Ser274, Ser331, and Ser370 each carry phosphoserine. Residues 392 to 414 (KTTGYSDRPTARRKPDYEPVENT) are disordered. Phosphoserine is present on residues Ser428, Ser451, Ser453, Ser455, Ser457, and Ser458.

The protein resides in the cytoplasm. Its subcellular location is the golgi apparatus membrane. Its activity is regulated as follows. GAP activity stimulated by phosphatidylinositol 4,5-bisphosphate (PIP2). Its function is as follows. GTPase-activating protein (GAP) for ADP ribosylation factor 1 (ARF1). Hydrolysis of ARF1-bound GTP may lead to dissociation of coatomer from Golgi-derived membranes to allow fusion with target membranes. This Macaca fascicularis (Crab-eating macaque) protein is ADP-ribosylation factor GTPase-activating protein 3.